A 477-amino-acid polypeptide reads, in one-letter code: Chromosomal replication initiator protein DnaA (477 aa).

Residues 1 to 87 (MSDRSDPTHA…AGVSNFAIVV (87 aa)) are domain I, interacts with DnaA modulators. The tract at residues 87–132 (VNPEIAQDAFAQHPEPAAEQPYIETPTITAPTDNPGLPASPSRGDS) is domain II. A disordered region spans residues 112–131 (PTITAPTDNPGLPASPSRGD). Residues 133–349 (RLNPKYGFDT…GTLIRVTAFA (217 aa)) form a domain III, AAA+ region region. ATP contacts are provided by glycine 177, glycine 179, lysine 180, and threonine 181. A domain IV, binds dsDNA region spans residues 350-477 (SLNKTPVDLA…IKQNHRYGKM (128 aa)).

It belongs to the DnaA family. Oligomerizes as a right-handed, spiral filament on DNA at oriC.

It is found in the cytoplasm. In terms of biological role, plays an essential role in the initiation and regulation of chromosomal replication. ATP-DnaA binds to the origin of replication (oriC) to initiate formation of the DNA replication initiation complex once per cell cycle. Binds the DnaA box (a 9 base pair repeat at the origin) and separates the double-stranded (ds)DNA. Forms a right-handed helical filament on oriC DNA; dsDNA binds to the exterior of the filament while single-stranded (ss)DNA is stabiized in the filament's interior. The ATP-DnaA-oriC complex binds and stabilizes one strand of the AT-rich DNA unwinding element (DUE), permitting loading of DNA polymerase. After initiation quickly degrades to an ADP-DnaA complex that is not apt for DNA replication. Binds acidic phospholipids. The chain is Chromosomal replication initiator protein DnaA from Clavibacter michiganensis subsp. michiganensis (strain NCPPB 382).